Reading from the N-terminus, the 129-residue chain is METQNAKAIARKISIAPRKARLVVDLIRGKNIAQAQAILTFTPKVAAPVILKLLNSAVSNAVNNLKLNREQLYVKEVFVNEGLRLKRMFPRAKGSGDMIKKRTSHITLVITSSTNLQTSKEEEQSGSKN.

It belongs to the universal ribosomal protein uL22 family. As to quaternary structure, part of the 50S ribosomal subunit.

This protein binds specifically to 23S rRNA; its binding is stimulated by other ribosomal proteins, e.g. L4, L17, and L20. It is important during the early stages of 50S assembly. It makes multiple contacts with different domains of the 23S rRNA in the assembled 50S subunit and ribosome. In terms of biological role, the globular domain of the protein is located near the polypeptide exit tunnel on the outside of the subunit, while an extended beta-hairpin is found that lines the wall of the exit tunnel in the center of the 70S ribosome. The chain is Large ribosomal subunit protein uL22 from Onion yellows phytoplasma (strain OY-M).